The chain runs to 382 residues: UDP-4-amino-4-deoxy-L-arabinose--oxoglutarate aminotransferase (382 aa).

At Lys182 the chain carries N6-(pyridoxal phosphate)lysine.

This sequence belongs to the DegT/DnrJ/EryC1 family. ArnB subfamily. As to quaternary structure, homodimer. It depends on pyridoxal 5'-phosphate as a cofactor.

It catalyses the reaction UDP-4-amino-4-deoxy-beta-L-arabinose + 2-oxoglutarate = UDP-beta-L-threo-pentopyranos-4-ulose + L-glutamate. The protein operates within nucleotide-sugar biosynthesis; UDP-4-deoxy-4-formamido-beta-L-arabinose biosynthesis; UDP-4-deoxy-4-formamido-beta-L-arabinose from UDP-alpha-D-glucuronate: step 2/3. Its pathway is bacterial outer membrane biogenesis; lipopolysaccharide biosynthesis. Catalyzes the conversion of UDP-4-keto-arabinose (UDP-Ara4O) to UDP-4-amino-4-deoxy-L-arabinose (UDP-L-Ara4N). The modified arabinose is attached to lipid A and is required for resistance to polymyxin and cationic antimicrobial peptides. The protein is UDP-4-amino-4-deoxy-L-arabinose--oxoglutarate aminotransferase of Pectobacterium carotovorum subsp. carotovorum (strain PC1).